The chain runs to 216 residues: Protein ORM2 (216 aa).

Residues 1 to 50 (MIDRTKNESPAFEESPLTPNVSNLKPFPSQSNKISTPVTDHRRRRSSSVI) are disordered. Over 1–78 (MIDRTKNESP…NMNATWVDQR (78 aa)) the chain is Cytoplasmic. A phosphoserine mark is found at S9 and S15. Residues 17–38 (LTPNVSNLKPFPSQSNKISTPV) show a composition bias toward polar residues. At T18 the chain carries Phosphothreonine. Phosphoserine is present on residues S22, S29, and S51. Residues 79-99 (GAWLIHIVVIVLLRLFYSLFG) form a helical membrane-spanning segment. Topologically, residues 100–103 (STPK) are extracellular. The helical transmembrane segment at 104-124 (WTWTLTNMTYIIGFYIMFHLV) threads the bilayer. Over 125 to 148 (KGTPFDFNGGAYDNLTMWEQINDE) the chain is Cytoplasmic. Residues 149 to 169 (TLYTPTRKFLLIVPIVLFLIS) traverse the membrane as a helical segment. Topologically, residues 170–177 (NQYYRNDM) are extracellular. A helical transmembrane segment spans residues 178 to 198 (TLFLSNLAVTVLIGVVPKLGI). At 199 to 216 (THRLRISIPGITGRAQIS) the chain is on the cytoplasmic side.

Belongs to the ORM family. Component of the SPOTS complex, at least composed of LCB1/2 (LCB1 and/or LCB2), ORM1/2 (ORM1 and/or ORM2), SAC1 and TSC3. Phosphorylated in case of disruption of sphingolipid synthesis. Phosphorylation regulates the inhibitory activity of serine palmitoyltransferases (LCB1 and LCB2).

It localises to the endoplasmic reticulum membrane. Component of the SPOTS complex that acts as a negative regulator of sphingolipid synthesis. Acts by inhibiting serine palmitoyltransferases (LCB1 and LCB2) activity. Along with ORM1, plays a role in the phosphorylation of LAC1 and YPK1, the distribution of actin patches between mother and daughter cells, and in endocytosis. The sequence is that of Protein ORM2 (ORM2) from Saccharomyces cerevisiae (strain ATCC 204508 / S288c) (Baker's yeast).